A 56-amino-acid polypeptide reads, in one-letter code: Small ribosomal subunit protein uS14 (56 aa).

Positions 21, 24, 39, and 42 each coordinate Zn(2+).

It belongs to the universal ribosomal protein uS14 family. It depends on Zn(2+) as a cofactor.

The polypeptide is Small ribosomal subunit protein uS14 (RPS29) (Triticum aestivum (Wheat)).